Reading from the N-terminus, the 769-residue chain is Serine protease HtrA-like (769 aa).

A compositionally biased stretch (basic residues) spans 1 to 20; that stretch reads MDIGKKHVIPKSQYRRKRRE. Disordered stretches follow at residues 1–287 and 324–390; these read MDIG…DKDN and EDKH…KGRA. Basic and acidic residues-rich tracts occupy residues 21-64 and 71-108; these read FFHN…ERFK and LEQR…DVSK. Polar residues predominate over residues 126–137; sequence YEQNSEATLSTK. A compositionally biased stretch (basic and acidic residues) spans 138 to 186; that stretch reads STDKVESTEMRKLSSDKNKVGHEEQHVLSKPSEHDKETRIDSESSRTDS. The span at 247–262 shows a compositional bias: polar residues; the sequence is QQSQNEQTKTYTYGDS. A compositionally biased stretch (basic and acidic residues) spans 264–287; that stretch reads QNDKSNHENDLSHHTPSISDDKDN. Positions 331–347 are enriched in polar residues; the sequence is ADSSETVGYQSQSTASH. A compositionally biased stretch (basic and acidic residues) spans 348 to 364; sequence RSTEKRNISINDHDKLN. A compositionally biased stretch (polar residues) spans 365-390; the sequence is GQKTNTKTSANNNQKKATSKLNKGRA. Residues 410 to 430 form a helical membrane-spanning segment; that stretch reads LVILMGIIILIVILNAIFNNV. Active-site charge relay system residues include His-504, Asp-534, and Ser-619. Residues 680–733 form the PDZ domain; that stretch reads IASLNSFERQAVKLPGKVKNGVVVDQVDNNGLADQSGLKKGDVITELDGKLLED.

It belongs to the peptidase S1C family.

The protein localises to the cell membrane. This chain is Serine protease HtrA-like, found in Staphylococcus aureus (strain N315).